The chain runs to 449 residues: MSNLAKQKVSMVSLGCPKNLVDAEVMLGVLAQQGYEITMDEKEADVIIVNTCSFIKEAREESVDAILDLADRKSDGNCKTLVVAGCLPQRYQEELAKELPEVDILIGTGDYPRVAEILAEHHAGDAQIKYVGDPNYIYDEDLPRLNSSPGWYAYLKIGEGCSNCCTYCVIPSLRGPYRSRPVEALVAEAERLVKGGVRELILVSQDITRYGSDMDDTSSLAGLIRRLAAIEDLKWIRLLYAYPDGISDELIELFKTEPKLCNYLDIPIQHISDNVLQRMKRRSSEEQIRTLIARLRNEIPGITLRTSLIVGFPGETVDDFLNLTQFVEKAQFDRLGVFCYSREEGTPAAEMPDQVSERVKRERHRKLMKTQARVSFRRNRAMVGQTEQVIVEGYSEETELLLKGRTSRQAPDIDGQVYITSGHAEIGDIVACKITDSSDYDLVAEMIEE.

Residues 7–123 (QKVSMVSLGC…VAEILAEHHA (117 aa)) form the MTTase N-terminal domain. 6 residues coordinate [4Fe-4S] cluster: Cys-16, Cys-52, Cys-86, Cys-161, Cys-165, and Cys-168. A Radical SAM core domain is found at 147–377 (SSPGWYAYLK…MKTQARVSFR (231 aa)). The region spanning 380-448 (RAMVGQTEQV…DYDLVAEMIE (69 aa)) is the TRAM domain.

The protein belongs to the methylthiotransferase family. RimO subfamily. [4Fe-4S] cluster is required as a cofactor.

It is found in the cytoplasm. The enzyme catalyses L-aspartate(89)-[ribosomal protein uS12]-hydrogen + (sulfur carrier)-SH + AH2 + 2 S-adenosyl-L-methionine = 3-methylsulfanyl-L-aspartate(89)-[ribosomal protein uS12]-hydrogen + (sulfur carrier)-H + 5'-deoxyadenosine + L-methionine + A + S-adenosyl-L-homocysteine + 2 H(+). In terms of biological role, catalyzes the methylthiolation of an aspartic acid residue of ribosomal protein uS12. This chain is Ribosomal protein uS12 methylthiotransferase RimO, found in Trichlorobacter lovleyi (strain ATCC BAA-1151 / DSM 17278 / SZ) (Geobacter lovleyi).